A 209-amino-acid polypeptide reads, in one-letter code: MKKGILGKKLGMTQIFNEEGKVVPVTVIEAGPCVVIQKKTSEKEGYDAIQVGFGTIREKLVNKPLKGHFAKGNVELKRFVKEFRLEDTSSYEVGAEIKADIFAAGEKVDVSGVSKGKGFQGTIRRWGAHRGPMSHGSKFHRAVGSMGGSSDPSRTFKSKKMPGHMGHVNTTVLNVEVAKVIPEKNLILIKGGVPGPNKSFVVIKNSVKA.

The disordered stretch occupies residues 141 to 164 (RAVGSMGGSSDPSRTFKSKKMPGH).

This sequence belongs to the universal ribosomal protein uL3 family. As to quaternary structure, part of the 50S ribosomal subunit. Forms a cluster with proteins L14 and L19.

One of the primary rRNA binding proteins, it binds directly near the 3'-end of the 23S rRNA, where it nucleates assembly of the 50S subunit. The polypeptide is Large ribosomal subunit protein uL3 (Clostridium acetobutylicum (strain ATCC 824 / DSM 792 / JCM 1419 / IAM 19013 / LMG 5710 / NBRC 13948 / NRRL B-527 / VKM B-1787 / 2291 / W)).